Consider the following 358-residue polypeptide: tRNA N6-adenosine threonylcarbamoyltransferase (358 aa).

Positions 122 and 126 each coordinate Fe cation. Residues 145–149 (LVSGG), Asp-178, Gly-191, and Asn-287 contribute to the substrate site. Residue Asp-315 participates in Fe cation binding.

The protein belongs to the KAE1 / TsaD family. Fe(2+) is required as a cofactor.

The protein localises to the cytoplasm. It carries out the reaction L-threonylcarbamoyladenylate + adenosine(37) in tRNA = N(6)-L-threonylcarbamoyladenosine(37) in tRNA + AMP + H(+). Functionally, required for the formation of a threonylcarbamoyl group on adenosine at position 37 (t(6)A37) in tRNAs that read codons beginning with adenine. Is involved in the transfer of the threonylcarbamoyl moiety of threonylcarbamoyl-AMP (TC-AMP) to the N6 group of A37, together with TsaE and TsaB. TsaD likely plays a direct catalytic role in this reaction. This is tRNA N6-adenosine threonylcarbamoyltransferase from Hydrogenovibrio crunogenus (strain DSM 25203 / XCL-2) (Thiomicrospira crunogena).